Reading from the N-terminus, the 180-residue chain is Large ribosomal subunit protein uL5 (180 aa).

This sequence belongs to the universal ribosomal protein uL5 family. Part of the 50S ribosomal subunit; part of the 5S rRNA/L5/L18/L25 subcomplex. Contacts the 5S rRNA and the P site tRNA. Forms a bridge to the 30S subunit in the 70S ribosome.

In terms of biological role, this is one of the proteins that bind and probably mediate the attachment of the 5S RNA into the large ribosomal subunit, where it forms part of the central protuberance. In the 70S ribosome it contacts protein S13 of the 30S subunit (bridge B1b), connecting the 2 subunits; this bridge is implicated in subunit movement. Contacts the P site tRNA; the 5S rRNA and some of its associated proteins might help stabilize positioning of ribosome-bound tRNAs. The sequence is that of Large ribosomal subunit protein uL5 from Roseiflexus sp. (strain RS-1).